The following is a 270-amino-acid chain: Formamidopyrimidine-DNA glycosylase (270 aa).

Residue proline 2 is the Schiff-base intermediate with DNA of the active site. The Proton donor role is filled by glutamate 3. Lysine 58 acts as the Proton donor; for beta-elimination activity in catalysis. The DNA site is built by histidine 91, arginine 110, and arginine 151. The segment at 236–270 (LVYGRDGLPCPNCGRALKHATIGQRASVWCSHCQR) adopts an FPG-type zinc-finger fold. The active-site Proton donor; for delta-elimination activity is arginine 260.

The protein belongs to the FPG family. In terms of assembly, monomer. The cofactor is Zn(2+).

It catalyses the reaction Hydrolysis of DNA containing ring-opened 7-methylguanine residues, releasing 2,6-diamino-4-hydroxy-5-(N-methyl)formamidopyrimidine.. The catalysed reaction is 2'-deoxyribonucleotide-(2'-deoxyribose 5'-phosphate)-2'-deoxyribonucleotide-DNA = a 3'-end 2'-deoxyribonucleotide-(2,3-dehydro-2,3-deoxyribose 5'-phosphate)-DNA + a 5'-end 5'-phospho-2'-deoxyribonucleoside-DNA + H(+). Involved in base excision repair of DNA damaged by oxidation or by mutagenic agents. Acts as a DNA glycosylase that recognizes and removes damaged bases. Has a preference for oxidized purines, such as 7,8-dihydro-8-oxoguanine (8-oxoG). Has AP (apurinic/apyrimidinic) lyase activity and introduces nicks in the DNA strand. Cleaves the DNA backbone by beta-delta elimination to generate a single-strand break at the site of the removed base with both 3'- and 5'-phosphates. The sequence is that of Formamidopyrimidine-DNA glycosylase from Stenotrophomonas maltophilia (strain K279a).